The primary structure comprises 199 residues: 7-methyl-GTP pyrophosphatase (199 aa).

Residue D76 is the Proton acceptor of the active site.

The protein belongs to the Maf family. YceF subfamily. It depends on a divalent metal cation as a cofactor.

The protein resides in the cytoplasm. The enzyme catalyses N(7)-methyl-GTP + H2O = N(7)-methyl-GMP + diphosphate + H(+). Its function is as follows. Nucleoside triphosphate pyrophosphatase that hydrolyzes 7-methyl-GTP (m(7)GTP). May have a dual role in cell division arrest and in preventing the incorporation of modified nucleotides into cellular nucleic acids. The protein is 7-methyl-GTP pyrophosphatase of Rhizobium johnstonii (strain DSM 114642 / LMG 32736 / 3841) (Rhizobium leguminosarum bv. viciae).